The primary structure comprises 33 residues: Photosystem II reaction center protein T (33 aa).

A helical membrane pass occupies residues alanine 3–phenylalanine 23.

The protein belongs to the PsbT family. PSII is composed of 1 copy each of membrane proteins PsbA, PsbB, PsbC, PsbD, PsbE, PsbF, PsbH, PsbI, PsbJ, PsbK, PsbL, PsbM, PsbT, PsbY, PsbZ, Psb30/Ycf12, at least 3 peripheral proteins of the oxygen-evolving complex and a large number of cofactors. It forms dimeric complexes.

The protein localises to the plastid. The protein resides in the chloroplast thylakoid membrane. Its function is as follows. Found at the monomer-monomer interface of the photosystem II (PS II) dimer, plays a role in assembly and dimerization of PSII. PSII is a light-driven water plastoquinone oxidoreductase, using light energy to abstract electrons from H(2)O, generating a proton gradient subsequently used for ATP formation. The protein is Photosystem II reaction center protein T of Arabidopsis thaliana (Mouse-ear cress).